The following is a 525-amino-acid chain: Peptide chain release factor 3 (525 aa).

Positions 9 to 276 constitute a tr-type G domain; it reads AKRRTFAIIS…GFTRYAPAPQ (268 aa). Residues 18 to 25, 86 to 90, and 140 to 143 contribute to the GTP site; these read SHPDAGKT, DTPGH, and NKFD.

Belongs to the TRAFAC class translation factor GTPase superfamily. Classic translation factor GTPase family. PrfC subfamily.

It is found in the cytoplasm. Increases the formation of ribosomal termination complexes and stimulates activities of RF-1 and RF-2. It binds guanine nucleotides and has strong preference for UGA stop codons. It may interact directly with the ribosome. The stimulation of RF-1 and RF-2 is significantly reduced by GTP and GDP, but not by GMP. This Francisella tularensis subsp. mediasiatica (strain FSC147) protein is Peptide chain release factor 3.